Here is a 734-residue protein sequence, read N- to C-terminus: DNA ligase (734 aa).

NAD(+) contacts are provided by residues 42-46 (DAEYD), 91-92 (SL), and Glu125. Lys127 (N6-AMP-lysine intermediate) is an active-site residue. NAD(+) is bound by residues Arg148, Glu185, Lys301, and Lys325. Zn(2+) is bound by residues Cys430, Cys433, Cys454, and Cys460. The BRCT domain maps to 655 to 734 (SADSEVAGKT…DTWLQRVGKA (80 aa)).

The protein belongs to the NAD-dependent DNA ligase family. LigA subfamily. Requires Mg(2+) as cofactor. It depends on Mn(2+) as a cofactor.

The enzyme catalyses NAD(+) + (deoxyribonucleotide)n-3'-hydroxyl + 5'-phospho-(deoxyribonucleotide)m = (deoxyribonucleotide)n+m + AMP + beta-nicotinamide D-nucleotide.. Its function is as follows. DNA ligase that catalyzes the formation of phosphodiester linkages between 5'-phosphoryl and 3'-hydroxyl groups in double-stranded DNA using NAD as a coenzyme and as the energy source for the reaction. It is essential for DNA replication and repair of damaged DNA. The sequence is that of DNA ligase from Mesorhizobium japonicum (strain LMG 29417 / CECT 9101 / MAFF 303099) (Mesorhizobium loti (strain MAFF 303099)).